A 32-amino-acid chain; its full sequence is Enolase (32 aa).

Belongs to the enolase family. As to quaternary structure, homodimer. Requires Mg(2+) as cofactor.

It localises to the cytoplasm. The enzyme catalyses (2R)-2-phosphoglycerate = phosphoenolpyruvate + H2O. It participates in carbohydrate degradation; glycolysis; pyruvate from D-glyceraldehyde 3-phosphate: step 4/5. This is Enolase from Imperata cylindrica (Cogon grass).